Here is a 471-residue protein sequence, read N- to C-terminus: Neuraminidase (471 aa).

The Intravirion segment spans residues 1 to 6 (MNPNQK). The chain crosses the membrane as a helical span at residues 7-27 (IICISATGMTLSVVSLLVGIA). The involved in apical transport and lipid raft association stretch occupies residues 11 to 33 (SATGMTLSVVSLLVGIANLGLNI). Over 28 to 471 (NLGLNIGLHY…HDGAEITYFK (444 aa)) the chain is Virion surface. A hypervariable stalk region region spans residues 36-89 (HYKVGYTPDVNTPNVNGTNSTTTTIINNNTQNNFTNITNIIQNKNEERTFLNLT). N-linked (GlcNAc...) asparagine; by host glycosylation is found at Asn51, Asn54, Asn63, Asn68, Asn71, and Asn87. The head of neuraminidase stretch occupies residues 92–471 (LCEVNSWHIL…HDGAEITYFK (380 aa)). Disulfide bonds link Cys93–Cys420, Cys125–Cys130, Cys185–Cys232, Cys234–Cys239, Cys280–Cys293, Cys282–Cys291, Cys320–Cys338, and Cys424–Cys450. Position 119 (Arg119) interacts with substrate. Residue Asn147 is glycosylated (N-linked (GlcNAc...) asparagine; by host). Residue Asp152 is the Proton donor/acceptor of the active site. Arg153 serves as a coordination point for substrate. Asn202 carries an N-linked (GlcNAc...) asparagine; by host glycan. 278 to 279 (EE) is a binding site for substrate. Arg294 contributes to the substrate binding site. Ca(2+) contacts are provided by Asp295, Gly299, and Asp326. Arg373 is a substrate binding site. Asn403 is a glycosylation site (N-linked (GlcNAc...) asparagine; by host). Tyr407 functions as the Nucleophile in the catalytic mechanism.

Belongs to the glycosyl hydrolase 34 family. In terms of assembly, homotetramer. The cofactor is Ca(2+). Post-translationally, N-glycosylated.

Its subcellular location is the virion membrane. It localises to the host apical cell membrane. It catalyses the reaction Hydrolysis of alpha-(2-&gt;3)-, alpha-(2-&gt;6)-, alpha-(2-&gt;8)- glycosidic linkages of terminal sialic acid residues in oligosaccharides, glycoproteins, glycolipids, colominic acid and synthetic substrates.. Its activity is regulated as follows. Inhibited by the neuraminidase inhibitors zanamivir (Relenza) and oseltamivir (Tamiflu). These drugs interfere with the release of progeny virus from infected cells and are effective against all influenza strains. Resistance to neuraminidase inhibitors is quite rare. Functionally, catalyzes the removal of terminal sialic acid residues from viral and cellular glycoconjugates. Cleaves off the terminal sialic acids on the glycosylated HA during virus budding to facilitate virus release. Additionally helps virus spread through the circulation by further removing sialic acids from the cell surface. These cleavages prevent self-aggregation and ensure the efficient spread of the progeny virus from cell to cell. Otherwise, infection would be limited to one round of replication. Described as a receptor-destroying enzyme because it cleaves a terminal sialic acid from the cellular receptors. May facilitate viral invasion of the upper airways by cleaving the sialic acid moieties on the mucin of the airway epithelial cells. Likely to plays a role in the budding process through its association with lipid rafts during intracellular transport. May additionally display a raft-association independent effect on budding. Plays a role in the determination of host range restriction on replication and virulence. Sialidase activity in late endosome/lysosome traffic seems to enhance virus replication. In Aves, this protein is Neuraminidase.